The sequence spans 167 residues: Endoribonuclease YbeY (167 aa).

His-131, His-135, and His-141 together coordinate Zn(2+).

It belongs to the endoribonuclease YbeY family. Requires Zn(2+) as cofactor.

It localises to the cytoplasm. In terms of biological role, single strand-specific metallo-endoribonuclease involved in late-stage 70S ribosome quality control and in maturation of the 3' terminus of the 16S rRNA. This is Endoribonuclease YbeY from Rickettsia felis (strain ATCC VR-1525 / URRWXCal2) (Rickettsia azadi).